A 397-amino-acid chain; its full sequence is Argininosuccinate synthase (397 aa).

9–17 (AYSGGLDTS) lines the ATP pocket. Position 85 (Tyr85) interacts with L-citrulline. Residue Gly115 participates in ATP binding. L-aspartate-binding residues include Thr117, Asn121, and Asp122. Residue Asn121 coordinates L-citrulline. Positions 125, 173, 258, and 270 each coordinate L-citrulline.

This sequence belongs to the argininosuccinate synthase family. Type 1 subfamily. As to quaternary structure, homotetramer.

It localises to the cytoplasm. The enzyme catalyses L-citrulline + L-aspartate + ATP = 2-(N(omega)-L-arginino)succinate + AMP + diphosphate + H(+). The protein operates within amino-acid biosynthesis; L-arginine biosynthesis; L-arginine from L-ornithine and carbamoyl phosphate: step 2/3. This chain is Argininosuccinate synthase, found in Streptococcus suis (strain 05ZYH33).